Here is a 183-residue protein sequence, read N- to C-terminus: UPF0397 protein EF_2154 (183 aa).

Transmembrane regions (helical) follow at residues 10–30 (IVAI…VVIP), 44–64 (FLAL…GLIG), 74–94 (GSAW…FGFA), 115–135 (IFQA…LDIL), and 147–167 (QGVF…TLLM).

Belongs to the UPF0397 family.

Its subcellular location is the cell membrane. The protein is UPF0397 protein EF_2154 of Enterococcus faecalis (strain ATCC 700802 / V583).